The following is a 943-amino-acid chain: Tyrosine-protein kinase transmembrane receptor ROR2 (943 aa).

A signal peptide spans 1–33 (MARGSALPRRPLLCIPAVWAAAALLLSVSRTSG). Residues 34 to 403 (EVEVLDPNDP…CSPRDSSKMG (370 aa)) are Extracellular-facing. One can recognise an Ig-like C2-type domain in the interval 55–145 (PTLKGYFLNF…VATNGMKTIT (91 aa)). The N-linked (GlcNAc...) asparagine glycan is linked to asparagine 70. Disulfide bonds link cysteine 83/cysteine 135, cysteine 174/cysteine 239, cysteine 182/cysteine 232, cysteine 223/cysteine 264, cysteine 252/cysteine 300, cysteine 256/cysteine 286, cysteine 316/cysteine 394, cysteine 337/cysteine 377, and cysteine 365/cysteine 389. Residues 169–303 (HEDGFCQPYR…SPDAANCMRI (135 aa)) enclose the FZ domain. N-linked (GlcNAc...) asparagine glycosylation is present at asparagine 188. In terms of domain architecture, Kringle spans 316–394 (CYNGSGMDYR…RMELCDVPSC (79 aa)). Asparagine 318 is a glycosylation site (N-linked (GlcNAc...) asparagine). The helical transmembrane segment at 404-424 (ILYILVPSIAIPLVIACLFFL) threads the bilayer. Residues 425-943 (VCMCRNKQKA…VDEAQVQLEA (519 aa)) are Cytoplasmic-facing. Sulfoserine; partial is present on residues serine 469 and serine 471. The 274-residue stretch at 473 to 746 (VRFMEELGED…PRFKDIHSRL (274 aa)) folds into the Protein kinase domain. Residues 479–487 (LGEDRFGKV) and lysine 507 contribute to the ATP site. The Proton acceptor role is filled by aspartate 615. Tyrosine 646 is subject to Phosphotyrosine; by autocatalysis. Disordered regions lie at residues 757–796 (SSAQ…APPF) and 850–931 (QVPP…DCDT). 2 stretches are compositionally biased toward low complexity: residues 765–791 (SNTT…GPKQ) and 857–872 (PKPS…TSTG). Arginine 785 is modified (asymmetric dimethylarginine). Polar residues predominate over residues 873 to 883 (YVTTAPSNTSM).

Belongs to the protein kinase superfamily. Tyr protein kinase family. ROR subfamily. In terms of assembly, homodimer; promotes osteogenesis. Binds YWHAB. Interacts with WTIP. Interacts with ROR2. The cofactor is Mg(2+).

The protein resides in the cell membrane. The enzyme catalyses L-tyrosyl-[protein] + ATP = O-phospho-L-tyrosyl-[protein] + ADP + H(+). Its function is as follows. Tyrosine-protein kinase receptor which may be involved in the early formation of the chondrocytes. It seems to be required for cartilage and growth plate development. Phosphorylates YWHAB, leading to induction of osteogenesis and bone formation. In contrast, has also been shown to have very little tyrosine kinase activity in vitro. May act as a receptor for wnt ligand WNT5A which may result in the inhibition of WNT3A-mediated signaling. This is Tyrosine-protein kinase transmembrane receptor ROR2 (ROR2) from Homo sapiens (Human).